Here is a 332-residue protein sequence, read N- to C-terminus: Glycerol-3-phosphate dehydrogenase [NAD(P)+] (332 aa).

The NADPH site is built by Trp13, Arg33, and Lys105. Residues Lys105, Gly134, and Ser136 each contribute to the sn-glycerol 3-phosphate site. NADPH is bound at residue Ala138. Positions 189, 242, 252, 253, and 254 each coordinate sn-glycerol 3-phosphate. Residue Lys189 is the Proton acceptor of the active site. Residue Arg253 coordinates NADPH. Residue Glu279 coordinates NADPH.

Belongs to the NAD-dependent glycerol-3-phosphate dehydrogenase family.

The protein localises to the cytoplasm. It catalyses the reaction sn-glycerol 3-phosphate + NAD(+) = dihydroxyacetone phosphate + NADH + H(+). The enzyme catalyses sn-glycerol 3-phosphate + NADP(+) = dihydroxyacetone phosphate + NADPH + H(+). It participates in membrane lipid metabolism; glycerophospholipid metabolism. Its function is as follows. Catalyzes the reduction of the glycolytic intermediate dihydroxyacetone phosphate (DHAP) to sn-glycerol 3-phosphate (G3P), the key precursor for phospholipid synthesis. The chain is Glycerol-3-phosphate dehydrogenase [NAD(P)+] from Halorhodospira halophila (strain DSM 244 / SL1) (Ectothiorhodospira halophila (strain DSM 244 / SL1)).